Here is a 235-residue protein sequence, read N- to C-terminus: Chromosome partition protein MukE (235 aa).

The interval 204–235 is disordered; it reads QQEPSQSSLLDGFDADDTGHHDSELTMQEGEV.

Belongs to the MukE family. Interacts, and probably forms a ternary complex, with MukF and MukB. The complex formation is stimulated by calcium or magnesium.

The protein resides in the cytoplasm. The protein localises to the nucleoid. Functionally, involved in chromosome condensation, segregation and cell cycle progression. May participate in facilitating chromosome segregation by condensation DNA from both sides of a centrally located replisome during cell division. Probably acts via its interaction with MukB and MukF. In Photobacterium profundum (strain SS9), this protein is Chromosome partition protein MukE.